The chain runs to 285 residues: RNA polymerase sigma factor RpoH (285 aa).

The segment at 53–122 (LILSHLRFVA…IHEYVLRNWR (70 aa)) is sigma-70 factor domain-2. Residues 77-80 (DLIQ) carry the Interaction with polymerase core subunit RpoC motif. The interval 229 to 281 (ALEGLDERSQHIIRARWLDDDNKSTLQELADQYGVSAERVRQLEKNAMKKLKM) is sigma-70 factor domain-4. The H-T-H motif DNA-binding region spans 254–273 (LQELADQYGVSAERVRQLEK).

The protein belongs to the sigma-70 factor family. RpoH subfamily. As to quaternary structure, interacts with the RNA polymerase core enzyme.

Its subcellular location is the cytoplasm. Sigma factors are initiation factors that promote the attachment of RNA polymerase to specific initiation sites and are then released. This sigma factor is involved in regulation of expression of heat shock genes. This chain is RNA polymerase sigma factor RpoH, found in Serratia marcescens.